The primary structure comprises 299 residues: Taste receptor type 2 member 4 (299 aa).

Residues methionine 1–alanine 9 lie on the Extracellular side of the membrane. The helical transmembrane segment at isoleucine 10–valine 30 threads the bilayer. Residues asparagine 31–arginine 46 lie on the Cytoplasmic side of the membrane. The chain crosses the membrane as a helical span at residues isoleucine 47–isoleucine 67. Topologically, residues tyrosine 68–serine 81 are extracellular. Residues alanine 82–leucine 102 form a helical membrane-spanning segment. Over asparagine 103 to arginine 131 the chain is Cytoplasmic. The helical transmembrane segment at leucine 132 to glutamine 152 threads the bilayer. The Extracellular segment spans residues alanine 153 to glutamate 172. 3 N-linked (GlcNAc...) asparagine glycosylation sites follow: asparagine 164, asparagine 165, and asparagine 169. Residues glycine 173–valine 193 form a helical membrane-spanning segment. Over threonine 194 to lysine 230 the chain is Cytoplasmic. The helical transmembrane segment at leucine 231–leucine 251 threads the bilayer. The Extracellular portion of the chain corresponds to proline 252–lysine 262. Residues serine 263–threonine 283 traverse the membrane as a helical segment. Residues histidine 284–lysine 299 lie on the Cytoplasmic side of the membrane.

It belongs to the G-protein coupled receptor T2R family.

It localises to the membrane. Its subcellular location is the cell projection. It is found in the cilium membrane. Gustducin-coupled receptor implicated in the perception of bitter compounds in the oral cavity and the gastrointestinal tract. Signals through PLCB2 and the calcium-regulated cation channel TRPM5. In airway epithelial cells, binding of denatonium increases the intracellular calcium ion concentration and stimulates ciliary beat frequency. This is Taste receptor type 2 member 4 (TAS2R4) from Papio hamadryas (Hamadryas baboon).